A 445-amino-acid chain; its full sequence is Enolase (445 aa).

2 residues coordinate substrate: histidine 165 and glutamate 174. The active-site Proton donor is the glutamate 217. Mg(2+) contacts are provided by aspartate 252, glutamate 303, and aspartate 330. Substrate is bound by residues glutamate 303 and aspartate 330. The Proton acceptor role is filled by lysine 355. Residues 382–385 (SHRS) and lysine 406 each bind substrate.

Belongs to the enolase family. Homodimer. Mg(2+) is required as a cofactor.

It localises to the cytoplasm. The catalysed reaction is (2R)-2-phosphoglycerate = phosphoenolpyruvate + H2O. It functions in the pathway carbohydrate degradation; glycolysis; pyruvate from D-glyceraldehyde 3-phosphate: step 4/5. The chain is Enolase (ENO) from Eimeria tenella (Coccidian parasite).